The primary structure comprises 324 residues: Beta-ketoacyl-[acyl-carrier-protein] synthase III (324 aa).

Active-site residues include Cys114 and His251. Residues 252 to 256 form an ACP-binding region; it reads QANQR. Asn281 is an active-site residue.

It belongs to the thiolase-like superfamily. FabH family. In terms of assembly, homodimer.

It localises to the cytoplasm. It catalyses the reaction malonyl-[ACP] + acetyl-CoA + H(+) = 3-oxobutanoyl-[ACP] + CO2 + CoA. The protein operates within lipid metabolism; fatty acid biosynthesis. Its function is as follows. Catalyzes the condensation reaction of fatty acid synthesis by the addition to an acyl acceptor of two carbons from malonyl-ACP. Catalyzes the first condensation reaction which initiates fatty acid synthesis and may therefore play a role in governing the total rate of fatty acid production. Possesses both acetoacetyl-ACP synthase and acetyl transacylase activities. Its substrate specificity determines the biosynthesis of branched-chain and/or straight-chain of fatty acids. The polypeptide is Beta-ketoacyl-[acyl-carrier-protein] synthase III (Rhodospirillum rubrum (strain ATCC 11170 / ATH 1.1.1 / DSM 467 / LMG 4362 / NCIMB 8255 / S1)).